The sequence spans 199 residues: Chorismate pyruvate-lyase (199 aa).

This sequence belongs to the chorismate pyruvate-lyase type 2 family.

It catalyses the reaction chorismate = 4-hydroxybenzoate + pyruvate. Functionally, removes the pyruvyl group from chorismate to provide 4-hydroxybenzoate (4HB). Involved in the synthesis of glycosylated p-hydroxybenzoic acid methyl esters (p-HBADs) and phenolic glycolipids (PGL) that play important roles in the pathogenesis of mycobacterial infections. This Mycobacterium bovis (strain ATCC BAA-935 / AF2122/97) protein is Chorismate pyruvate-lyase.